We begin with the raw amino-acid sequence, 288 residues long: MDVTAKYELIGLMAYPIRHSLSPEMQNKALEKAGLPFTYMAFEVDNDSFPGAIEGLKALKMRGTGVSMPNKQLACEYVDELTPAAKLVGAINTIVNDDGYLRGYNTDGTGHIRAIKESGFDIKGKTMVLLGAGGASTAIGAQGAIEGLKEIKLFNRRDEFFDKALAFAQRVNENTDCVVTDTDLADQQAFAEALASADILTNGTKVGMKPFENESLVNDISLLHPGLLVTECVYNPHMTKLLQQAQQAGCKTIDGYGMLLWQGAEQFTLWTGKDFPLEYVKQVMGFGA.

Substrate is bound by residues Lys-71 and Asp-107. NAD(+)-binding positions include 132–135 (AGGA), 155–158 (NRRD), Lys-205, 232–235 (CVYN), and Gly-255.

It belongs to the shikimate dehydrogenase family. Homodimer.

It catalyses the reaction L-quinate + NAD(+) = 3-dehydroquinate + NADH + H(+). It carries out the reaction L-quinate + NADP(+) = 3-dehydroquinate + NADPH + H(+). The enzyme catalyses shikimate + NADP(+) = 3-dehydroshikimate + NADPH + H(+). The catalysed reaction is shikimate + NAD(+) = 3-dehydroshikimate + NADH + H(+). Its pathway is metabolic intermediate biosynthesis; chorismate biosynthesis; chorismate from D-erythrose 4-phosphate and phosphoenolpyruvate: step 4/7. In terms of biological role, the actual biological function of YdiB remains unclear, nor is it known whether 3-dehydroshikimate or quinate represents the natural substrate. Catalyzes the reversible NAD-dependent reduction of both 3-dehydroshikimate (DHSA) and 3-dehydroquinate to yield shikimate (SA) and quinate, respectively. It can use both NAD or NADP for catalysis, however it has higher catalytic efficiency with NAD. The polypeptide is Quinate/shikimate dehydrogenase (Shigella flexneri).